A 393-amino-acid chain; its full sequence is Arginine biosynthesis bifunctional protein ArgJ 3 (393 aa).

Threonine 148, lysine 170, threonine 181, glutamate 260, asparagine 388, and threonine 393 together coordinate substrate. The active-site Nucleophile is threonine 181.

Belongs to the ArgJ family. As to quaternary structure, heterotetramer of two alpha and two beta chains.

It localises to the cytoplasm. It catalyses the reaction N(2)-acetyl-L-ornithine + L-glutamate = N-acetyl-L-glutamate + L-ornithine. The enzyme catalyses L-glutamate + acetyl-CoA = N-acetyl-L-glutamate + CoA + H(+). The protein operates within amino-acid biosynthesis; L-arginine biosynthesis; L-ornithine and N-acetyl-L-glutamate from L-glutamate and N(2)-acetyl-L-ornithine (cyclic): step 1/1. It participates in amino-acid biosynthesis; L-arginine biosynthesis; N(2)-acetyl-L-ornithine from L-glutamate: step 1/4. Catalyzes two activities which are involved in the cyclic version of arginine biosynthesis: the synthesis of N-acetylglutamate from glutamate and acetyl-CoA as the acetyl donor, and of ornithine by transacetylation between N(2)-acetylornithine and glutamate. This Streptomyces clavuligerus protein is Arginine biosynthesis bifunctional protein ArgJ 3.